The chain runs to 622 residues: Chaperone protein DnaK (622 aa).

A Phosphothreonine; by autocatalysis modification is found at Thr197. Basic and acidic residues-rich tracts occupy residues 515-528 (LHKE…EAVE) and 575-614 (ASKE…KKDD). 2 disordered regions span residues 515 to 537 (LHKE…DSLV) and 575 to 622 (ASKE…AEVE).

Belongs to the heat shock protein 70 family.

Acts as a chaperone. In Campylobacter lari (strain RM2100 / D67 / ATCC BAA-1060), this protein is Chaperone protein DnaK.